Here is a 445-residue protein sequence, read N- to C-terminus: FAS-associated factor 2 (445 aa).

Ala-2 carries the post-translational modification N-acetylalanine. A UBA domain is found at 12 to 48 (EQTEKLLQFQDLTGIESMEQCRLALEQHNWNMEAAVQ). At Lys-167 the chain carries N6-acetyllysine. Positions 275 to 350 (SERLEREERN…EEKERKLECL (76 aa)) form a coiled coil. The interval 300–361 (SLRADQEKER…PEPSPDDPES (62 aa)) is disordered. The segment covering 303–348 (ADQEKERKKREEKERKRRKEEEVQQQKLAEERRRQNLQEEKERKLE) has biased composition (basic and acidic residues). The UBX domain occupies 357–439 (DDPESVKIIF…GLSHTEVLFV (83 aa)).

As to quaternary structure, identified in a complex that contains SEL1L, OS9, FAF2/UBXD8, UBE2J1/UBC6E and AUP1. Interacts with YOD1. Interacts (via N-terminus) with UBQLN2 (via C-terminus). Interacts with PNPLA2. Interacts with ZFAND2B; probably through VCP. Interacts with LMBR1L and UBAC2.

Its subcellular location is the cytoplasm. The protein localises to the lipid droplet. It localises to the endoplasmic reticulum. Functionally, plays an important role in endoplasmic reticulum-associated degradation (ERAD) that mediates ubiquitin-dependent degradation of misfolded endoplasmic reticulum proteins. By controlling the steady-state expression of the IGF1R receptor, indirectly regulates the insulin-like growth factor receptor signaling pathway. Involved in inhibition of lipid droplet degradation by binding to phospholipase PNPL2 and inhibiting its activity by promoting dissociation of PNPL2 from its endogenous activator, ABHD5 which inhibits the rate of triacylglycerol hydrolysis. Involved in stress granule disassembly: associates with ubiquitinated G3BP1 in response to heat shock, thereby promoting interaction between ubiquitinated G3BP1 and VCP, followed by G3BP1 extraction from stress granules and stress granule disassembly. In Mus musculus (Mouse), this protein is FAS-associated factor 2 (Faf2).